A 326-amino-acid chain; its full sequence is tRNA-modifying protein YgfZ (326 aa).

Folate contacts are provided by W27 and W189.

The protein belongs to the tRNA-modifying YgfZ family.

Its subcellular location is the cytoplasm. Functionally, folate-binding protein involved in regulating the level of ATP-DnaA and in the modification of some tRNAs. It is probably a key factor in regulatory networks that act via tRNA modification, such as initiation of chromosomal replication. This Escherichia coli O17:K52:H18 (strain UMN026 / ExPEC) protein is tRNA-modifying protein YgfZ.